The sequence spans 269 residues: S-adenosylmethionine decarboxylase proenzyme (269 aa).

Residue serine 118 is the Schiff-base intermediate with substrate; via pyruvic acid of the active site. At serine 118 the chain carries Pyruvic acid (Ser); by autocatalysis. The active-site Proton acceptor; for processing activity is the histidine 123. Cysteine 146 acts as the Proton donor; for catalytic activity in catalysis.

It belongs to the prokaryotic AdoMetDC family. Type 2 subfamily. Heterooctamer of four alpha and four beta chains arranged as a tetramer of alpha/beta heterodimers. The cofactor is pyruvate. Post-translationally, is synthesized initially as an inactive proenzyme. Formation of the active enzyme involves a self-maturation process in which the active site pyruvoyl group is generated from an internal serine residue via an autocatalytic post-translational modification. Two non-identical subunits are generated from the proenzyme in this reaction, and the pyruvate is formed at the N-terminus of the alpha chain, which is derived from the carboxyl end of the proenzyme. The post-translation cleavage follows an unusual pathway, termed non-hydrolytic serinolysis, in which the side chain hydroxyl group of the serine supplies its oxygen atom to form the C-terminus of the beta chain, while the remainder of the serine residue undergoes an oxidative deamination to produce ammonia and the pyruvoyl group blocking the N-terminus of the alpha chain.

The catalysed reaction is S-adenosyl-L-methionine + H(+) = S-adenosyl 3-(methylsulfanyl)propylamine + CO2. It participates in amine and polyamine biosynthesis; S-adenosylmethioninamine biosynthesis; S-adenosylmethioninamine from S-adenosyl-L-methionine: step 1/1. In terms of biological role, catalyzes the decarboxylation of S-adenosylmethionine to S-adenosylmethioninamine (dcAdoMet), the propylamine donor required for the synthesis of the polyamines spermine and spermidine from the diamine putrescine. The polypeptide is S-adenosylmethionine decarboxylase proenzyme (Brevibacillus brevis (strain 47 / JCM 6285 / NBRC 100599)).